The sequence spans 367 residues: UDP-N-acetylglucosamine--N-acetylmuramyl-(pentapeptide) pyrophosphoryl-undecaprenol N-acetylglucosamine transferase (367 aa).

UDP-N-acetyl-alpha-D-glucosamine is bound by residues 15–17, Asn127, Arg163, Ser191, Ile249, and Gln294; that span reads TGG.

The protein belongs to the glycosyltransferase 28 family. MurG subfamily.

It localises to the cell inner membrane. The catalysed reaction is di-trans,octa-cis-undecaprenyl diphospho-N-acetyl-alpha-D-muramoyl-L-alanyl-D-glutamyl-meso-2,6-diaminopimeloyl-D-alanyl-D-alanine + UDP-N-acetyl-alpha-D-glucosamine = di-trans,octa-cis-undecaprenyl diphospho-[N-acetyl-alpha-D-glucosaminyl-(1-&gt;4)]-N-acetyl-alpha-D-muramoyl-L-alanyl-D-glutamyl-meso-2,6-diaminopimeloyl-D-alanyl-D-alanine + UDP + H(+). It functions in the pathway cell wall biogenesis; peptidoglycan biosynthesis. In terms of biological role, cell wall formation. Catalyzes the transfer of a GlcNAc subunit on undecaprenyl-pyrophosphoryl-MurNAc-pentapeptide (lipid intermediate I) to form undecaprenyl-pyrophosphoryl-MurNAc-(pentapeptide)GlcNAc (lipid intermediate II). The chain is UDP-N-acetylglucosamine--N-acetylmuramyl-(pentapeptide) pyrophosphoryl-undecaprenol N-acetylglucosamine transferase from Burkholderia orbicola (strain MC0-3).